Here is a 593-residue protein sequence, read N- to C-terminus: MITISILLMYLIVGLLTALTVLIFVFILLKFYEFRFFKQTETYQRELEQEILKINNQEELEEKLKEHYLFQSNHKVFTKRDLREIRNFFIAVLSDKILLENKNKLLSNEIIEKKKENEELKTKLDAKKVEEKITLLKEMNLTHEEAKKRLLEEYRGYVRNDLDKMVKEEEKAANDKKNAITNELNKLLINAMGNVSLLTETVRMNTVKTIKYEYVDVDPIKVKKVTDDFFGKIIGKEARNKKYIERLFNVEIIIKPESSRISISSFNTIKLEVAYNALNKIIEAVNDQGTHVLDESLIRKSWYGALNEFSAEAKRIGEETLKELGLYESAFIPTKEISEFIGRLKFRGSNTQNVLTHSIEAAQIAESIADQLNLNKEKAKVCALLHDIGKAIDKESVSSEGKWKNLKYAANDHVSAGVEIAQYYKFDIDIIDAINCHHGRKKIYEKSKNFYAKITKIADFLSAARPGVRFVKDNDIERRFDTISNILTKYVDEKIISTYKILKNGYNINLMINPDITESEYSQLTLDLKKDIESDKELSKYPITITYVQNITRSETTNAIAHAKKTVEIYSEDKAELVNDEELSTVEFLDEDI.

Residues 6 to 26 (ILLMYLIVGLLTALTVLIFVF) form a helical membrane-spanning segment. One can recognise a KH domain in the interval 218–278 (DPIKVKKVTD…IKLEVAYNAL (61 aa)). The region spanning 354-464 (VLTHSIEAAQ…TKIADFLSAA (111 aa)) is the HD domain.

Belongs to the RNase Y family.

The protein resides in the cell membrane. In terms of biological role, endoribonuclease that initiates mRNA decay. This chain is Ribonuclease Y, found in Mycoplasmoides gallisepticum (strain R(low / passage 15 / clone 2)) (Mycoplasma gallisepticum).